The following is a 428-amino-acid chain: Aspartate--tRNA(Asp) ligase (428 aa).

Residue glutamate 170 coordinates L-aspartate. The interval 192–195 is aspartate; it reads QLYK. Position 213 (arginine 213) interacts with L-aspartate. Residues 213 to 215 and glutamate 351 each bind ATP; that span reads RAE. 2 residues coordinate Mg(2+): glutamate 351 and serine 354. Residues serine 354 and arginine 358 each coordinate L-aspartate. 399–402 is a binding site for ATP; that stretch reads GFNR.

Belongs to the class-II aminoacyl-tRNA synthetase family. Type 2 subfamily. In terms of assembly, homodimer. Mg(2+) serves as cofactor.

It localises to the cytoplasm. It carries out the reaction tRNA(Asp) + L-aspartate + ATP = L-aspartyl-tRNA(Asp) + AMP + diphosphate. Functionally, catalyzes the attachment of L-aspartate to tRNA(Asp) in a two-step reaction: L-aspartate is first activated by ATP to form Asp-AMP and then transferred to the acceptor end of tRNA(Asp). The chain is Aspartate--tRNA(Asp) ligase from Pyrobaculum aerophilum (strain ATCC 51768 / DSM 7523 / JCM 9630 / CIP 104966 / NBRC 100827 / IM2).